The chain runs to 1009 residues: Glutamate receptor ionotropic, delta-1 (1009 aa).

Positions 1 to 20 (MEALTLWLLPWICQCVTVRA) are cleaved as a signal peptide. The segment at 21-436 (DSIIHIGAIF…ERPMGSRLQG (416 aa)) is interaction with CBLN1. Residues 21–562 (DSIIHIGAIF…SIFSLFAPFD (542 aa)) lie on the Extracellular side of the membrane. Cystine bridges form between C80/C351, C96/C128, and C294/C306. Residues N131 and N200 are each glycosylated (N-linked (GlcNAc...) asparagine). N-linked (GlcNAc...) asparagine glycosylation is found at N422 and N498. Positions 527, 530, and 531 each coordinate Ca(2+). Residues 563 to 583 (FAVWACIAAAIPVVGVLIFVL) traverse the membrane as a helical segment. The Cytoplasmic portion of the chain corresponds to 584-637 (NRIQAVRSQSATQPRPSASATLHSAIWIVYGAFVQQGGESSVNSVAMRIVMGSW). The chain crosses the membrane as a helical span at residues 638–658 (WLFTLIVCSSYTANLAAFLTV). Residues 659-830 (SRMDNPIRTF…TEGKSLKLHS (172 aa)) lie on the Extracellular side of the membrane. Residues D753, D755, and S757 each coordinate Ca(2+). The chain crosses the membrane as a helical span at residues 831-851 (FAGVFCILAIGLLLACLVAAL). The Cytoplasmic segment spans residues 852-1009 (ELWWNSNRCH…ALDTSHGTSI (158 aa)). The span at 931–942 (LPEQSSHGTSRT) shows a compositional bias: polar residues. Positions 931–960 (LPEQSSHGTSRTLSSGPSSNLPLPLSSSAT) are disordered. The span at 943–958 (LSSGPSSNLPLPLSSS) shows a compositional bias: low complexity.

Belongs to the glutamate-gated ion channel (TC 1.A.10.1) family. GRID1 subfamily. Homodimer. Interacts (via extracellular N-terminal domain) with CBLN1 (via C1q domain), and more weakly with CBLN2; the interactions mediate the trans-synaptic adhesion complexes also with neurexins and are required for ligand-gated cation channel activity. Equally in forebrain and cerebellum.

Its subcellular location is the postsynaptic cell membrane. It carries out the reaction Ca(2+)(in) = Ca(2+)(out). The enzyme catalyses Na(+)(in) = Na(+)(out). Its function is as follows. Member of the ionotropic glutamate receptor family, which plays a crucial role in synaptic organization and signal transduction in the central nervous system. Although it shares structural features with ionotropic glutamate receptors, does not bind glutamate as a primary ligand. Instead, forms trans-synaptic adhesion complexes with presynaptic neurexins and cerebellins, regulating NMDA and AMPA receptor activity and influencing synaptic plasticity through signal transduction. In the presence of NRX1B-CBLN1, forms cation-selective channels that are proposed to be gated by glycine and D-serine. However, recent research disputes this ligand-gated cation channel activity. Cation-selective ion channel can be triggered by GRM1 in dopaminergic neurons. Also acts as a receptor for GABA, modulating inhibitory synaptic plasticity through non-ionotropic mechanisms. The protein is Glutamate receptor ionotropic, delta-1 (Grid1) of Mus musculus (Mouse).